The following is a 1012-amino-acid chain: Structural polyprotein (1012 aa).

An a divalent metal cation-binding site is contributed by D30. One can recognise a Peptidase S50 domain in the interval 513-755 (ADKGYEVVAN…AGRQYHLAMA (243 aa)). S652 functions as the Nucleophile in the catalytic mechanism. K692 is a catalytic residue. Positions 970 to 1012 (MEMKHRNPRRAPPKPKPKPNAPTQRPPGRLGRWIRTVSDEDLE) are disordered. Residues 975–986 (RNPRRAPPKPKP) are compositionally biased toward basic residues. The interval 1003 to 1012 (IRTVSDEDLE) is interaction with VP1 protein.

As to quaternary structure, homotrimer. A central divalent metal stabilizes the VP2 trimer. Interacts with host ITGA4/ITGB1. In terms of assembly, homodimer. Interacts (via C-terminus) with VP1 in the cytoplasm. Interacts with VP2. Post-translationally, specific enzymatic cleavages yield mature proteins. The capsid assembly seems to be regulated by polyprotein processing. The protease VP4 cleaves itself off the polyprotein, thus releasing pre-VP2 and VP3 within the infected cell. During capsid assembly, the C-terminus of pre-VP2 is further processed by VP4, giving rise to VP2, the external capsid protein and three small peptides that all stay closely associated with the capsid.

The protein localises to the virion. It is found in the host cytoplasm. Its function is as follows. Capsid protein VP2 self assembles to form an icosahedral capsid with a T=13 symmetry, about 70 nm in diameter, and consisting of 260 VP2 trimers. The capsid encapsulates the genomic dsRNA. VP2 is also involved in attachment and entry into the host cell by interacting with host ITGA4/ITGB1. The precursor of VP2 plays an important role in capsid assembly. First, pre-VP2 and VP2 oligomers assemble to form a procapsid. Then, the pre-VP2 intermediates may be processed into VP2 proteins by proteolytic cleavage mediated by VP4 to obtain the mature virion. The final capsid is composed of pentamers and hexamers but VP2 has a natural tendency to assemble into all-pentameric structures. Therefore pre-VP2 may be required to allow formation of the hexameric structures. In terms of biological role, protease VP4 is a serine protease that cleaves the polyprotein into its final products. Pre-VP2 is first partially cleaved, and may be completely processed by VP4 upon capsid maturation. Functionally, capsid protein VP3 plays a key role in virion assembly by providing a scaffold for the capsid made of VP2. May self-assemble to form a T=4-like icosahedral inner-capsid composed of at least 180 trimers. Plays a role in genomic RNA packaging by recruiting VP1 into the capsid and interacting with the dsRNA genome segments to form a ribonucleoprotein complex. Additionally, the interaction of the VP3 C-terminal tail with VP1 removes the inherent structural blockade of the polymerase active site. Thus, VP3 can also function as a transcriptional activator. Its function is as follows. Structural peptide 1 is a small peptide derived from pre-VP2 C-terminus. It destabilizes and perforates cell membranes, suggesting a role during entry. Structural peptide 2 is a small peptide derived from pVP2 C-terminus. It is not essential for the virus viability, but viral growth is affected when missing. In terms of biological role, structural peptide 3 is a small peptide derived from pVP2 C-terminus. It is not essential for the virus viability, but viral growth is affected when missing. Functionally, structural peptide 4 is a small peptide derived from pVP2 C-terminus. It is essential for the virus viability. This is Structural polyprotein from Avian infectious bursal disease virus (strain E) (IBDV).